Reading from the N-terminus, the 56-residue chain is Large ribosomal subunit protein bL32 (56 aa).

The tract at residues 1–37 (MAVQQNKKSRSRRDMRRSHDALTTAAVSVDKASGETH) is disordered. Residues 7–16 (KKSRSRRDMR) are compositionally biased toward basic residues.

Belongs to the bacterial ribosomal protein bL32 family.

This chain is Large ribosomal subunit protein bL32, found in Haemophilus influenzae (strain PittEE).